Consider the following 498-residue polypeptide: Probable malate:quinone oxidoreductase (498 aa).

Belongs to the MQO family. Requires FAD as cofactor.

It carries out the reaction (S)-malate + a quinone = a quinol + oxaloacetate. Its pathway is carbohydrate metabolism; tricarboxylic acid cycle; oxaloacetate from (S)-malate (quinone route): step 1/1. This chain is Probable malate:quinone oxidoreductase, found in Prochlorococcus marinus (strain AS9601).